The chain runs to 299 residues: UPF0276 protein ABO_1518 (299 aa).

Belongs to the UPF0276 family.

In Alcanivorax borkumensis (strain ATCC 700651 / DSM 11573 / NCIMB 13689 / SK2), this protein is UPF0276 protein ABO_1518.